A 593-amino-acid polypeptide reads, in one-letter code: V-type sodium ATPase catalytic subunit A (593 aa).

232-239 (GPFGAGKT) is an ATP binding site.

It belongs to the ATPase alpha/beta chains family.

The catalysed reaction is 4 Na(+)(in) + ATP + H2O = 4 Na(+)(out) + ADP + phosphate + H(+). Involved in ATP-driven sodium extrusion. This Enterococcus hirae (strain ATCC 9790 / DSM 20160 / JCM 8729 / LMG 6399 / NBRC 3181 / NCIMB 6459 / NCDO 1258 / NCTC 12367 / WDCM 00089 / R) protein is V-type sodium ATPase catalytic subunit A (ntpA).